A 635-amino-acid polypeptide reads, in one-letter code: MAKWTINDSSKIYNIDNWGAELFSINKKGNVCVHPSPNSKYSIDLKVLVDDLIKRKIKPPILLRFMNILEGRIASISRVFKNAISDNNYPAKYQTFYPIKVNQQRQVVEAIANFGKKYNIGLEVGSKPELVAAISMSTGNNLPILCNGYKDTEFIETVLFATRVGYDITIVVEKLFELEKIVEVSKRTGIVPKLGIRVKLSSKGIGKWSTSGGDDAKFGLRISELIAAIDMLKQNDMLDSVKLLHFHVGSQITKIDKIKNALIEGTRIYAEMRKLGVNLEFLDIGGGLGVDYDGSKSSYFSSVNYSLEEYANDVIYQVKNICDDAGVPCPNIISESGRATVAHYSVLVTDVLNNNTQTLMPDFESILTEPEKLSPTVKKLVDIYKSIDKHSLREDYHDTIQLIQESVSLFNLGYLNMAERANAEWICSKIIRKINSIVEKMKPIPDELQNFQLSLRQTYFANFSLFQSIPDSWAIDQLFPIVPIQRLDEKPDVLTSIADITCDSDGEITSFVGENGRTKALPLHKIKVDEQYYIGFFLIGAYQEILGDMHNLFGDTNAVHITFNKKTNYKIDTVISGDATWESLKYVQYDSQEILKRVRNNLEKDVSLQKVSIEESSHFLELLDKTLQSYTYLGE.

K100 is subject to N6-(pyridoxal phosphate)lysine. 282 to 292 (LDIGGGLGVDY) lines the substrate pocket.

It belongs to the Orn/Lys/Arg decarboxylase class-II family. SpeA subfamily. Requires Mg(2+) as cofactor. It depends on pyridoxal 5'-phosphate as a cofactor.

It catalyses the reaction L-arginine + H(+) = agmatine + CO2. Its pathway is amine and polyamine biosynthesis; agmatine biosynthesis; agmatine from L-arginine: step 1/1. In terms of biological role, catalyzes the biosynthesis of agmatine from arginine. This Citrifermentans bemidjiense (strain ATCC BAA-1014 / DSM 16622 / JCM 12645 / Bem) (Geobacter bemidjiensis) protein is Biosynthetic arginine decarboxylase (speA).